A 60-amino-acid chain; its full sequence is MGKATYTVTVTNNSNGVSVDYETETPMTLLVPEVAAEVIKDLVNTVRSYDTENEHDVCGW.

As to quaternary structure, homodimer.

The protein is Protein YoaG (yoaG) of Escherichia coli O157:H7.